Consider the following 890-residue polypeptide: Protein FAM171A1 (890 aa).

A signal peptide spans 1–21 (MSRSATLLLCLLGCHVWKAVT). Residues 22–303 (KTLREPGAGA…VTQDITTYHT (282 aa)) are Extracellular-facing. N-linked (GlcNAc...) asparagine glycans are attached at residues Asn159, Asn190, and Asn194. A helical membrane pass occupies residues 304–324 (VFLLAILGGMAFILLVLLCLL). Topologically, residues 325–890 (LYYCRRKCLK…ERPLMAFNIK (566 aa)) are cytoplasmic. 6 positions are modified to phosphoserine: Ser358, Ser360, Ser371, Ser422, Ser443, and Ser525. Disordered regions lie at residues 730–759 (AGRN…RGDA) and 818–890 (EGSS…FNIK). A compositionally biased stretch (basic and acidic residues) spans 747–757 (NEPKSARKGRG). Residues 822–833 (RRSGGQLPSLQE) show a composition bias toward polar residues. Phosphoserine is present on residues Ser849 and Ser855. A compositionally biased stretch (acidic residues) spans 858 to 869 (EEEEDDDDDDQG). The segment covering 870-883 (EDKKSPWQKREERP) has biased composition (basic and acidic residues).

Belongs to the FAM171 family. In terms of assembly, interacts with ADAM10, NSG1 and OAZ1. As to expression, expressed in heart, brain, liver, skeletal muscle, kidney and pancreas. In brain, expressed by glia, pyramidal neurons and astrocytes (at protein level). Highly expressed in placental trophoblasts.

The protein resides in the cell membrane. In terms of biological role, involved in the regulation of the cytoskeletal dynamics, plays a role in actin stress fiber formation. This chain is Protein FAM171A1, found in Homo sapiens (Human).